The following is a 95-amino-acid chain: Small ribosomal subunit protein bS20c (95 aa).

This sequence belongs to the bacterial ribosomal protein bS20 family.

The protein resides in the plastid. The protein localises to the cyanelle. Functionally, binds directly to 16S ribosomal RNA. The protein is Small ribosomal subunit protein bS20c (rps20) of Cyanophora paradoxa.